The following is a 414-amino-acid chain: Histidine--tRNA ligase (414 aa).

The protein belongs to the class-II aminoacyl-tRNA synthetase family. In terms of assembly, homodimer.

The protein resides in the cytoplasm. The catalysed reaction is tRNA(His) + L-histidine + ATP = L-histidyl-tRNA(His) + AMP + diphosphate + H(+). This is Histidine--tRNA ligase (hisS) from Mycoplasma genitalium (strain ATCC 33530 / DSM 19775 / NCTC 10195 / G37) (Mycoplasmoides genitalium).